Reading from the N-terminus, the 308-residue chain is Acetylglutamate kinase (308 aa).

Substrate-binding positions include 73–74, Arg95, and Asn194; that span reads GG.

This sequence belongs to the acetylglutamate kinase family. ArgB subfamily.

It localises to the cytoplasm. The catalysed reaction is N-acetyl-L-glutamate + ATP = N-acetyl-L-glutamyl 5-phosphate + ADP. Its pathway is amino-acid biosynthesis; L-arginine biosynthesis; N(2)-acetyl-L-ornithine from L-glutamate: step 2/4. In terms of biological role, catalyzes the ATP-dependent phosphorylation of N-acetyl-L-glutamate. The chain is Acetylglutamate kinase from Rhodococcus jostii (strain RHA1).